Reading from the N-terminus, the 179-residue chain is MEQYRGTTILSIRRGNQVVIGGDGQVSLGNTIMKGNARKVRRLYKNQVIAGFAGGTADAFTLFERFEAKLESHGGQLVRAAVELAKDWRTDRALRRLEALLAVADKEASLIITGNGDVIQPEDDLIAIGSGGAFAQSAARALLDNTELSAREIVQKGLTIAGDICIYTNHNQTIEELEY.

Residue Thr-7 is part of the active site. The Na(+) site is built by Gly-162, Cys-165, and Thr-168.

Belongs to the peptidase T1B family. HslV subfamily. A double ring-shaped homohexamer of HslV is capped on each side by a ring-shaped HslU homohexamer. The assembly of the HslU/HslV complex is dependent on binding of ATP.

It localises to the cytoplasm. It carries out the reaction ATP-dependent cleavage of peptide bonds with broad specificity.. Its activity is regulated as follows. Allosterically activated by HslU binding. Protease subunit of a proteasome-like degradation complex believed to be a general protein degrading machinery. The polypeptide is ATP-dependent protease subunit HslV (Teredinibacter turnerae (strain ATCC 39867 / T7901)).